The primary structure comprises 178 residues: Ribosomal RNA small subunit methyltransferase G (178 aa).

S-adenosyl-L-methionine contacts are provided by residues G54, L59, 105 to 106 (LE), and R120.

The protein belongs to the methyltransferase superfamily. RNA methyltransferase RsmG family.

Its subcellular location is the cytoplasm. It catalyses the reaction guanosine(527) in 16S rRNA + S-adenosyl-L-methionine = N(7)-methylguanosine(527) in 16S rRNA + S-adenosyl-L-homocysteine. Specifically methylates the N7 position of guanine in position 527 of 16S rRNA. This chain is Ribosomal RNA small subunit methyltransferase G, found in Helicobacter acinonychis (strain Sheeba).